We begin with the raw amino-acid sequence, 741 residues long: Zinc finger and BTB domain-containing protein 20 (741 aa).

Residues 1–17 (MLERKKPKTAENQKASE) show a composition bias toward basic and acidic residues. The disordered stretch occupies residues 1-28 (MLERKKPKTAENQKASEENEITQPGGSS). The 64-residue stretch at 104–167 (CDVTVRIHGS…MYSGVLRVSQ (64 aa)) folds into the BTB domain. The tract at residues 203 to 235 (GIQDSGQDTPRGTPESGTSGQSSDTESGYLQSH) is disordered. Polar residues predominate over residues 206-235 (DSGQDTPRGTPESGTSGQSSDTESGYLQSH). Threonine 211 carries the phosphothreonine modification. A Glycyl lysine isopeptide (Lys-Gly) (interchain with G-Cter in SUMO1); alternate cross-link involves residue lysine 330. Lysine 330 participates in a covalent cross-link: Glycyl lysine isopeptide (Lys-Gly) (interchain with G-Cter in SUMO2); alternate. A disordered region spans residues 350–440 (RNESEECTED…SSPERSNESE (91 aa)). Serine 353 bears the Phosphoserine mark. A compositionally biased stretch (acidic residues) spans 354 to 367 (EECTEDTDQAEGTE). At threonine 357 the chain carries Phosphothreonine. Residue lysine 371 forms a Glycyl lysine isopeptide (Lys-Gly) (interchain with G-Cter in SUMO2) linkage. Low complexity predominate over residues 404–423 (AEPAQPEQAAEAPAESSAQP). C2H2-type zinc fingers lie at residues 578-600 (YECT…MFVH), 606-628 (HQCS…MVTH), 634-656 (YQCS…MRLH), and 662-684 (YECY…VALH). Threonine 690 and threonine 695 each carry phosphothreonine. Residues 715 to 737 (YVCSVCPAKFDQIEQFNDHMRMH) form a C2H2-type 5 zinc finger. Lysine 723 participates in a covalent cross-link: Glycyl lysine isopeptide (Lys-Gly) (interchain with G-Cter in SUMO2).

As to quaternary structure, can homodimerize. Binds to DNA. Post-translationally, sumoylated with SUMO1. As to expression, specifically expressed in early hippocampal neurons, cerebellar granule cells and gliogenic progenitors as well as in differentiated glia. Expressed in adult and aged myogenic satellite cells.

It localises to the nucleus. Its function is as follows. May be a transcription factor that may be involved in hematopoiesis, oncogenesis, and immune responses. Plays a role in postnatal myogenesis, may be involved in the regulation of satellite cells self-renewal. In Mus musculus (Mouse), this protein is Zinc finger and BTB domain-containing protein 20 (Zbtb20).